Consider the following 213-residue polypeptide: Virion protein US10 homolog (213 aa).

It belongs to the herpesviridae US10 family. Post-translationally, phosphorylated.

It is found in the virion tegument. The protein resides in the host nucleus matrix. The chain is Virion protein US10 homolog (US639) from Gallid herpesvirus 2 (strain GA) (GaHV-2).